The primary structure comprises 37 residues: Desulforedoxin (37 aa).

The Fe cation site is built by cysteine 10, cysteine 13, cysteine 29, and cysteine 30.

To the N-terminal section of desulfoferrodoxin. In terms of assembly, homodimer. Fe cation serves as cofactor.

Its function is as follows. Nonheme iron protein possibly involved in electron transport. The protein is Desulforedoxin (dsr) of Megalodesulfovibrio gigas (Desulfovibrio gigas).